Reading from the N-terminus, the 152-residue chain is Transcription elongation factor Spt5 (152 aa).

The KOW domain occupies 99 to 128; it reads PGDVVEVISGPFRGTQAQVIRVEEAKGEVV.

Belongs to the archaeal Spt5 family. Heterodimer composed of Spt4 and Spt5. Interacts with RNA polymerase (RNAP).

Functionally, stimulates transcription elongation. The sequence is that of Transcription elongation factor Spt5 from Saccharolobus solfataricus (strain ATCC 35092 / DSM 1617 / JCM 11322 / P2) (Sulfolobus solfataricus).